A 69-amino-acid chain; its full sequence is MIFKVFYQENPDEVPVREKTKTLYIEAESEREVRQKLQGHTMNIEYIQPLEGAHLEYEKKNPDFKVLEI.

The protein belongs to the RNA polymerase subunit epsilon family. RNAP is composed of a core of 2 alpha, a beta and a beta' subunit. The core is associated with a delta subunit, and at least one of epsilon or omega. When a sigma factor is associated with the core the holoenzyme is formed, which can initiate transcription.

It catalyses the reaction RNA(n) + a ribonucleoside 5'-triphosphate = RNA(n+1) + diphosphate. In terms of biological role, a non-essential component of RNA polymerase (RNAP). This Geobacillus sp. (strain WCH70) protein is DNA-directed RNA polymerase subunit epsilon.